Reading from the N-terminus, the 126-residue chain is Large ribosomal subunit protein bL12 (126 aa).

Belongs to the bacterial ribosomal protein bL12 family. As to quaternary structure, homodimer. Part of the ribosomal stalk of the 50S ribosomal subunit. Forms a multimeric L10(L12)X complex, where L10 forms an elongated spine to which 2 to 4 L12 dimers bind in a sequential fashion. Binds GTP-bound translation factors.

Functionally, forms part of the ribosomal stalk which helps the ribosome interact with GTP-bound translation factors. Is thus essential for accurate translation. This chain is Large ribosomal subunit protein bL12, found in Bordetella avium (strain 197N).